A 261-amino-acid chain; its full sequence is Putative phosphite transport system permease protein HtxE (261 aa).

An ABC transmembrane type-1 domain is found at 47-253 (EATTETVEVL…VFVFVLDQLQ (207 aa)). Helical transmembrane passes span 122-142 (LIVA…GVLA), 203-220 (RNLR…GGIG), and 229-249 (MFQY…VFVL).

Belongs to the binding-protein-dependent transport system permease family.

It localises to the cell inner membrane. Its function is as follows. Probably forms part of a binding-protein-dependent hypophosphite transporter. This Stutzerimonas stutzeri (Pseudomonas stutzeri) protein is Putative phosphite transport system permease protein HtxE (htxE).